A 267-amino-acid chain; its full sequence is Dynein axonemal assembly factor 19 homolog (267 aa).

Disordered regions lie at residues 86-111 (ISQSQLPPTTPTEVPTTSGDFTRDWR) and 226-250 (HQGKQEQPAAAEAPHEEGGSTVDPC).

It belongs to the DNAAF19/PR46b family. In terms of assembly, homodimer.

Its subcellular location is the cytoplasm. The protein resides in the cell projection. It localises to the cilium. It is found in the flagellum. Functionally, dynein-attachment factor required for cilia motility. This chain is Dynein axonemal assembly factor 19 homolog (PR46b), found in Chlamydomonas reinhardtii (Chlamydomonas smithii).